We begin with the raw amino-acid sequence, 82 residues long: Small ribosomal subunit protein uS17 (82 aa).

It belongs to the universal ribosomal protein uS17 family. Part of the 30S ribosomal subunit.

In terms of biological role, one of the primary rRNA binding proteins, it binds specifically to the 5'-end of 16S ribosomal RNA. In Rhodopseudomonas palustris (strain HaA2), this protein is Small ribosomal subunit protein uS17.